A 446-amino-acid polypeptide reads, in one-letter code: Serum factor response D (446 aa).

In terms of domain architecture, MADS-box spans 1 to 61 (MGRKKIKIQR…PNAKEKYFQY (61 aa)). Disordered stretches follow at residues 95–195 (KKEK…FNSS), 210–296 (TQEN…CQQV), and 319–432 (CSSP…SNLN). Residues 112–121 (SHSEEEDHKS) are compositionally biased toward basic and acidic residues. Over residues 133 to 142 (HHNHHHHHHQ) the composition is skewed to basic residues. Low complexity-rich tracts occupy residues 143–195 (YNNN…FNSS) and 216–282 (HYNN…NNNN). The segment covering 322–355 (PEDTSPMTSPRTPPFSSTNTNTLQTSPNSQQKSK) has biased composition (polar residues). Residues 365–432 (NNNQNNNNQN…SPTSSSSNLN (68 aa)) are compositionally biased toward low complexity.

The protein resides in the nucleus. The polypeptide is Serum factor response D (srfD) (Dictyostelium discoideum (Social amoeba)).